The chain runs to 2368 residues: Voltage-dependent P/Q-type calcium channel subunit alpha-1A (2368 aa).

The Cytoplasmic portion of the chain corresponds to 1–100; it reads MARFGDEMPG…KYAKKITEWP (100 aa). Residues 65–365 form an I repeat; it reads NPIPVRQNCL…LVLGVLSGEF (301 aa). A helical membrane pass occupies residues 101 to 119; the sequence is PFEYMILATIIANCIVLAL. The Extracellular portion of the chain corresponds to 120–138; the sequence is EQHLPDDDKTPMSERLDDT. The chain crosses the membrane as a helical span at residues 139-156; the sequence is EPYFIGIFCFEAGIKIVA. Residues 157–168 lie on the Cytoplasmic side of the membrane; sequence LGFAFHKGSYLR. Residues 169–184 traverse the membrane as a helical segment; it reads NGWNVMDFVVVLTGIL. Over 185–192 the chain is Extracellular; the sequence is ATVGTEFD. The helical transmembrane segment at 193 to 211 threads the bilayer; that stretch reads LRTLRAVRVLRPLKLVSGI. At 212–230 the chain is on the cytoplasmic side; it reads PSLQVVLKSIMKAMIPLLQ. A helical transmembrane segment spans residues 231–250; it reads IGLLLFFAILIFAIIGLEFY. Topologically, residues 251-337 are extracellular; the sequence is MGKFHTTCFE…NSNDASGNTW (87 aa). A glycan (N-linked (GlcNAc...) asparagine) is linked at Asn285. Residue Glu320 coordinates Ca(2+). Residues 338-362 form a helical membrane-spanning segment; that stretch reads NWLYFIPLIIIGSFFMLNLVLGVLS. Topologically, residues 363-489 are cytoplasmic; sequence GEFAKERERV…FYIRRMVKTQ (127 aa). Residues 385–402 form a binding to the beta subunit region; it reads QQIERELNGYMEWISKAE. Residue Thr411 is modified to Phosphothreonine. A phosphoserine mark is found at Ser450 and Ser453. The stretch at 475 to 719 is one II repeat; the sequence is ERRMRFYIRR…VFLAIAVDNL (245 aa). A helical transmembrane segment spans residues 490 to 509; that stretch reads AFYWTVLSLVALNTLCVAIV. The Extracellular segment spans residues 510–523; sequence HYNQPEWLSDFLYY. A helical membrane pass occupies residues 524 to 543; that stretch reads AEFIFLGLFMSEMFIKMYGL. Over 544–551 the chain is Cytoplasmic; the sequence is GTRPYFHS. Residues 552-570 form a helical membrane-spanning segment; that stretch reads SFNCFDCGVIIGSIFEVIW. At 571–580 the chain is on the extracellular side; sequence AVIKPGTSFG. The helical transmembrane segment at 581-599 threads the bilayer; it reads ISVLRALRLLRIFKVTKYW. At 600 to 618 the chain is on the cytoplasmic side; that stretch reads ASLRNLVVSLLNSMKSIIS. Residues 619–638 form a helical membrane-spanning segment; that stretch reads LLFLLFLFIVVFALLGMQLF. Over 639–691 the chain is Extracellular; sequence GGQFNFDEGTPPTNFDTFPAAIMTVFQILTGEDWNEVMYDGIKSQGGVQGGMV. Position 670 (Glu670) interacts with Ca(2+). Residues 692–716 form a helical membrane-spanning segment; sequence FSIYFIVLTLFGNYTLLNVFLAIAV. Residues 717-1190 are Cytoplasmic-facing; the sequence is DNLANAQELT…TNPLRRLCHY (474 aa). Phosphoserine is present on residues Ser752 and Ser755. Residues 762 to 781 are disordered; it reads AVKEQQKNQKPTKSVWEQRT. The span at 769-779 shows a compositional bias: polar residues; it reads NQKPTKSVWEQ. At Ser792 the chain carries Phosphoserine. 2 disordered regions span residues 823-1117 and 1137-1170; these read PLVV…RKPE and VNKN…KPMP. Basic and acidic residues-rich tracts occupy residues 850–862, 871–924, and 932–958; these read RPRE…DARR, APGR…EGEP, and RPGD…RAAD. Ser1038, Ser1042, and Ser1051 each carry phosphoserine. The span at 1056–1073 shows a compositional bias: polar residues; sequence GNSTNPGPALATNPQNAA. Residues 1074-1083 are compositionally biased toward low complexity; that stretch reads SRRTPNNPGN. A compositionally biased stretch (polar residues) spans 1094-1111; the sequence is ENSLIVTNPSSTQPNSAK. The span at 1153 to 1163 shows a compositional bias: acidic residues; sequence KKEEEEADPGE. One copy of the III repeat lies at 1182 to 1465; the sequence is NPLRRLCHYI…IFVALIIITF (284 aa). Residues 1191 to 1214 traverse the membrane as a helical segment; sequence ILNLRYFEMCILMVIAMSSIALAA. Topologically, residues 1215–1231 are extracellular; sequence EDPVQPNAPRNNVLRYF. A helical transmembrane segment spans residues 1232–1251; the sequence is DYVFTGVFTFEMVIKMIDLG. Topologically, residues 1252 to 1258 are cytoplasmic; sequence LVLHQGA. The chain crosses the membrane as a helical span at residues 1259–1282; the sequence is YFRDLWNILDFIVVSGALVAFAFT. At 1283 to 1293 the chain is on the extracellular side; it reads GNSKGKDINTI. A helical membrane pass occupies residues 1294–1311; that stretch reads KSLRVLRVLRPLKTIKRL. Topologically, residues 1312 to 1330 are cytoplasmic; it reads PKLKAVFDCVVNSLKNVFN. The helical transmembrane segment at 1331 to 1350 threads the bilayer; sequence ILIVYMLFMFIFAVVAVQLF. The Extracellular segment spans residues 1351–1437; sequence KGKFFHCTDE…QGPSPGYRME (87 aa). Glu1411 is a binding site for Ca(2+). The chain crosses the membrane as a helical span at residues 1438–1462; the sequence is MSIFYVVYFVVFPFFFVNIFVALII. Residues 1463–1518 are Cytoplasmic-facing; sequence ITFQEQGDKMMEEYSLEKNERACIDFAISAKPLTRHMPQNKQSFQYRMWQFVVSPP. The stretch at 1502-1765 is one IV repeat; sequence NKQSFQYRMW…LFVAVIMDNF (264 aa). The helical transmembrane segment at 1519 to 1537 threads the bilayer; that stretch reads FEYTIMAMIALNTIVLMMK. Residues 1538–1551 are Extracellular-facing; that stretch reads FYGASVAYENALRV. A helical membrane pass occupies residues 1552-1573; it reads FNIVFTSLFSLECVLKVMAFGI. The Cytoplasmic portion of the chain corresponds to 1574 to 1580; sequence LNYFRDA. A helical transmembrane segment spans residues 1581–1600; that stretch reads WNIFDFVTVLGSITDILVTE. Residues 1601 to 1607 lie on the Extracellular side of the membrane; that stretch reads FGNNFIN. An N-linked (GlcNAc...) asparagine glycan is attached at Asn1607. The chain crosses the membrane as a helical span at residues 1608 to 1626; sequence LSFLRLFRAARLIKLLRQG. Topologically, residues 1627-1645 are cytoplasmic; that stretch reads YTIRILLWTFVQSFKALPY. The chain crosses the membrane as a helical span at residues 1646–1665; that stretch reads VCLLIAMLFFIYAIIGMQVF. At 1666 to 1737 the chain is on the extracellular side; the sequence is GNIGIDGEDE…ILTADCGNEF (72 aa). The chain crosses the membrane as a helical span at residues 1738 to 1763; sequence AYFYFVSFIFLCSFLMLNLFVAVIMD. Topologically, residues 1764–2368 are cytoplasmic; it reads NFEYLTRDSS…AYSESEDDWC (605 aa). Phosphothreonine is present on Thr1935. The segment at 1940-2368 is disordered; that stretch reads QRMEPPSPTQ…AYSESEDDWC (429 aa). Polar residues-rich tracts occupy residues 1948–1963 and 1981–1997; these read TQEG…STQL and SWVT…TGTW. Phosphoserine is present on residues Ser1998, Ser2016, Ser2028, Ser2030, Ser2071, and Ser2091. A compositionally biased stretch (polar residues) spans 2008–2017; sequence PNSQPNSQSV. Residues 2018-2034 are compositionally biased toward basic and acidic residues; sequence EMREMGTDGYSDSEHYL. A compositionally biased stretch (polar residues) spans 2063-2073; it reads DLSTISDTSPM. Composition is skewed to basic and acidic residues over residues 2085 to 2102 and 2143 to 2153; these read RRLD…ENQR and PSKDRDQDRGR. Positions 2154–2172 are enriched in basic residues; it reads PKDRKHRPHHHHHHHHHHP. Positions 2173–2209 are enriched in basic and acidic residues; that stretch reads PAPDRDRYAQERPDTGRARAREQRWSRSPSEGREHTT. Residues 2213-2231 show a composition bias toward low complexity; sequence GSSSVSGSPAPSTSGTSTP. Positions 2289–2305 are enriched in basic and acidic residues; sequence EGPRPRGADYTEPDSPR.

It belongs to the calcium channel alpha-1 subunit (TC 1.A.1.11) family. CACNA1A subfamily. As to quaternary structure, voltage-dependent calcium channels are multisubunit complexes, consisting of alpha-1, alpha-2, beta and delta subunits in a 1:1:1:1 ratio. The channel activity is directed by the pore-forming and voltage-sensitive alpha-1 subunit. In many cases, this subunit is sufficient to generate voltage-sensitive calcium channel activity. The auxiliary subunits beta and alpha-2/delta linked by a disulfide bridge regulate the channel activity. Interacts with CABP1. Interacts with the spider omega-agatoxin-IVA (AC P30288). Interacts with TSPOAP1. As to expression, brain specific; mainly found in the cerebellum, olfactory bulb, cerebral cortex, hippocampus, and inferior colliculus. In the hippocampus, expression occurs in pyramidal and granule neurons, as well as in interneurons. Purkinje cells contain predominantly P-type VSCC, the Q-type being a prominent calcium current in cerebellar granule cells.

It localises to the cell membrane. It catalyses the reaction Ca(2+)(in) = Ca(2+)(out). Its function is as follows. Voltage-sensitive calcium channels (VSCC) mediate the entry of calcium ions into excitable cells and are also involved in a variety of calcium-dependent processes, including muscle contraction, hormone or neurotransmitter release, gene expression, cell motility, cell division and cell death. The isoform alpha-1A gives rise to P and/or Q-type calcium currents. P/Q-type calcium channels belong to the 'high-voltage activated' (HVA) group and are specifically blocked by the spider omega-agatoxin-IVA (AC P54282). They are however insensitive to dihydropyridines (DHP). This is Voltage-dependent P/Q-type calcium channel subunit alpha-1A from Mus musculus (Mouse).